A 430-amino-acid polypeptide reads, in one-letter code: Phosphomethylpyrimidine synthase (430 aa).

Substrate is bound by residues N67, M96, Y125, H161, 183–185 (SRG), 224–227 (DALR), and E263. H267 serves as a coordination point for Zn(2+). Y290 serves as a coordination point for substrate. A Zn(2+)-binding site is contributed by H331. [4Fe-4S] cluster contacts are provided by C406, C409, and C413.

This sequence belongs to the ThiC family. Homodimer. Requires [4Fe-4S] cluster as cofactor.

The catalysed reaction is 5-amino-1-(5-phospho-beta-D-ribosyl)imidazole + S-adenosyl-L-methionine = 4-amino-2-methyl-5-(phosphooxymethyl)pyrimidine + CO + 5'-deoxyadenosine + formate + L-methionine + 3 H(+). Its pathway is cofactor biosynthesis; thiamine diphosphate biosynthesis. Functionally, catalyzes the synthesis of the hydroxymethylpyrimidine phosphate (HMP-P) moiety of thiamine from aminoimidazole ribotide (AIR) in a radical S-adenosyl-L-methionine (SAM)-dependent reaction. The chain is Phosphomethylpyrimidine synthase from Campylobacter jejuni (strain RM1221).